Consider the following 423-residue polypeptide: Histidine--tRNA ligase (423 aa).

Belongs to the class-II aminoacyl-tRNA synthetase family. Homodimer.

The protein localises to the cytoplasm. The enzyme catalyses tRNA(His) + L-histidine + ATP = L-histidyl-tRNA(His) + AMP + diphosphate + H(+). The polypeptide is Histidine--tRNA ligase (Orientia tsutsugamushi (strain Boryong) (Rickettsia tsutsugamushi)).